Reading from the N-terminus, the 177-residue chain is Adenine phosphoribosyltransferase (177 aa).

This sequence belongs to the purine/pyrimidine phosphoribosyltransferase family. Homodimer.

It localises to the cytoplasm. The enzyme catalyses AMP + diphosphate = 5-phospho-alpha-D-ribose 1-diphosphate + adenine. It functions in the pathway purine metabolism; AMP biosynthesis via salvage pathway; AMP from adenine: step 1/1. Functionally, catalyzes a salvage reaction resulting in the formation of AMP, that is energically less costly than de novo synthesis. The chain is Adenine phosphoribosyltransferase from Chlorobium luteolum (strain DSM 273 / BCRC 81028 / 2530) (Pelodictyon luteolum).